Consider the following 235-residue polypeptide: MAEKVNNFPPLPKFIPLKPCFYQDFEADIPPQHLSLTKRLYYLWMLNSVTLAVNLVGCLAWLIGGGGATNFGLAFLWLILFTPCSYVCWFRPIYKAFKTDSSFSFMAFFFTFMAQLVISIIQAVGIPGWGVCGWIATISFFGTNIGSAVVMLIPTVMFTVVAVFSFIALSMVHKFYRGSGGSFSKAQEEWTTGAWKNPHVQQAAQNAAMGAAQGAMNQPQTQYSTTPNYTYSNEM.

The Cytoplasmic portion of the chain corresponds to 1 to 39; it reads MAEKVNNFPPLPKFIPLKPCFYQDFEADIPPQHLSLTKR. A helical membrane pass occupies residues 40–60; sequence LYYLWMLNSVTLAVNLVGCLA. The Extracellular portion of the chain corresponds to 61–67; the sequence is WLIGGGG. The helical transmembrane segment at 68–88 threads the bilayer; sequence ATNFGLAFLWLILFTPCSYVC. The Cytoplasmic segment spans residues 89–102; it reads WFRPIYKAFKTDSS. Residues 103–125 traverse the membrane as a helical segment; it reads FSFMAFFFTFMAQLVISIIQAVG. Residues 126-148 are Extracellular-facing; sequence IPGWGVCGWIATISFFGTNIGSA. A helical transmembrane segment spans residues 149 to 169; the sequence is VVMLIPTVMFTVVAVFSFIAL. The Cytoplasmic portion of the chain corresponds to 170-235; it reads SMVHKFYRGS…TPNYTYSNEM (66 aa).

Belongs to the SCAMP family. SCAMP5 subfamily. As to quaternary structure, interacts (via C-terminal part) with SYT1 and SYT2; interaction with synaptotagmins making a link with the SNARE molecules. Interacts with SLC9A7.

It is found in the cell membrane. The protein localises to the golgi apparatus membrane. Its subcellular location is the golgi apparatus. It localises to the trans-Golgi network membrane. The protein resides in the recycling endosome membrane. It is found in the cytoplasmic vesicle. The protein localises to the secretory vesicle. Its subcellular location is the synaptic vesicle membrane. Functionally, required for the calcium-dependent exocytosis of signal sequence-containing cytokines such as CCL5. Probably acts in cooperation with the SNARE machinery. This chain is Secretory carrier-associated membrane protein 5 (Scamp5), found in Rattus norvegicus (Rat).